Reading from the N-terminus, the 509-residue chain is MMLPKRNIIHFLRKRAIFIVAAFIALLTVDYSLNTIEITDSKSGPFSLNTPIEDIRLVECFSFSPFCRPVLEFWKWARTSRNLYRSRIPWKRAYLYVKRPALYIPGETVLVEQVYVDRQLEKRNKHGIQIRYGTDGDICEFNTLLGEDVVELREGWSAVLNDFIYLGQPVLLTQRPCETPPTPSIEALKRKELSSVTLTYDDEEKKTIKILQLSDLHYSNSDRPCRDPYPYETAEDCMADAKTTAFVNELLQLEEPDFVLLTGDLINGDTSRDARSSLMKAVSPFVDYNVPFAVNFGNHDDLGDLSREELAKILSQIPGSMGLIGNVSGVGNFVLHSPRKFAIYVLDTKGDTSNRRLCPGYDAITEDQLEWLSSKVADFKYEPIQMAVLHIPLKEFCETEDLVGAFREPCSYSICDPNTAKALKSLRIPLAIAGHDHVNDFCGIHPDYNTYFCFAGGAGFGGYGGHGGYVRRARVFELDPVERAVRTWKRLEWPPEDRKLMLDVQTILV.

A signal peptide spans 1–32; it reads MMLPKRNIIHFLRKRAIFIVAAFIALLTVDYS.

The protein resides in the endoplasmic reticulum. This is an uncharacterized protein from Schizosaccharomyces pombe (strain 972 / ATCC 24843) (Fission yeast).